The chain runs to 509 residues: Protein disulfide-isomerase (509 aa).

A signal peptide spans 1–18; the sequence is MLRRAVLCLALAVTAGWA. The region spanning 19–135 is the Thioredoxin 1 domain; that stretch reads WAAEEEDNVL…IVNWLKKRTG (117 aa). Residues cysteine 54 and cysteine 57 each act as nucleophile in the active site. Residues cysteine 54 and cysteine 57 are joined by a disulfide bond. N6-succinyllysine is present on residues lysine 223 and lysine 272. Residues serine 332 and serine 358 each carry the phosphoserine modification. A Thioredoxin 2 domain is found at 347 to 476; the sequence is FLEGKIKPHL…FKKFLESGGQ (130 aa). Residues cysteine 398 and cysteine 401 each act as nucleophile in the active site. Cysteine 398 and cysteine 401 are disulfide-bonded. Serine 428 bears the Phosphoserine mark. The disordered stretch occupies residues 471-509; sequence LESGGQDGAGDEDGLEDLEEAEEPDLEEDDDQKAVRDEL. Positions 479–501 are enriched in acidic residues; that stretch reads AGDEDGLEDLEEAEEPDLEEDDD. Residues 506-509 carry the Prevents secretion from ER motif; the sequence is RDEL.

It belongs to the protein disulfide isomerase family. Heterodimer; heterodimerizes with the protein microsomal triglyceride transfer MTTP. Homodimer. Monomers and homotetramers may also occur. Interacts with P4HA2, forming a heterotetramer consisting of 2 alpha subunits (P4HA2) and 2 beta (P4HB), where P4HB plays the role of a structural subunit; this tetramer catalyzes the formation of 4-hydroxyproline in collagen. Also constitutes the structural subunit of the microsomal triacylglycerol transfer protein MTTP in mammalian cells. Stabilizes both enzymes and retain them in the ER without contributing to the catalytic activity. Binds UBQLN1. Interacts with ERO1B. Interacts with ILDR2. Interacts with ERN1/IRE1A (via N-terminus); the interaction is enhanced by phosphorylation of P4HB by FAM20C in response to endoplasmic reticulum stress and results in attenuation of ERN1 activity. Post-translationally, phosphorylation of Ser-358 by FAM20C is induced by endoplasmic reticulum stress and results in a functional switch from oxidoreductase to molecular chaperone. It also promotes interaction with ERN1.

It is found in the endoplasmic reticulum. Its subcellular location is the endoplasmic reticulum lumen. It localises to the melanosome. The protein resides in the cell membrane. The enzyme catalyses Catalyzes the rearrangement of -S-S- bonds in proteins.. Its function is as follows. This multifunctional protein catalyzes the formation, breakage and rearrangement of disulfide bonds. At the cell surface, seems to act as a reductase that cleaves disulfide bonds of proteins attached to the cell. May therefore cause structural modifications of exofacial proteins. Inside the cell, seems to form/rearrange disulfide bonds of nascent proteins. At high concentrations and following phosphorylation by FAM20C, functions as a chaperone that inhibits aggregation of misfolded proteins. At low concentrations, facilitates aggregation (anti-chaperone activity). May be involved with other chaperones in the structural modification of the TG precursor in hormone biogenesis. Also acts as a structural subunit of various enzymes such as prolyl 4-hydroxylase and microsomal triacylglycerol transfer protein MTTP. Receptor for LGALS9; the interaction retains P4HB at the cell surface of Th2 T helper cells, increasing disulfide reductase activity at the plasma membrane, altering the plasma membrane redox state and enhancing cell migration. In Oryctolagus cuniculus (Rabbit), this protein is Protein disulfide-isomerase (P4HB).